The chain runs to 596 residues: MATLSMQVSTLSKQVKNLNTFGMGSASKLPMVARRVSTIRLRPICSASLQVEEKTRRSGNYQAPVWNNDFIQSFSTDKYKDEKFLKKKEELIAQVKILLNTKMEAVKQLELIEDLRNLGLTYYFEDEFKKILTSIYNEHKGFKNEQVGDLYFTSLAFRLLRLHGFDVSEDVFNFFKNEDGSDFKASLGENTKDVLELYEASFLIRVGEVTLEQARVFSTKILEKKVEEGIKDEKLLAWIQHSLALPLHWRIQRLEARWFLDAYKARKDMNPIIFELGKIDFHIIQETQLQEVQEVSQWWTNTNLAEKLPFVRDRIVECYFWALGLFEPHEYGYQRKMAAIIITFVTIIDDVYDVYGTLDELQLFTDAIRTWDFESISTLPYYMQVCYLALYTYASELAYDILKDQGFNSISYLQRSWLSLVEGFFQEAKWYYAGYTPTLAEYLENAKVSISSPTIISQVYFTLPNSTERTVVENVYGYHNILYLSGMILRLADDLGTTQFELKRGDVQKAIQCYMNDNNATEQEGTEHVKYLLREAWQEMNSAMADPDCPLSEDLVFAAANLGRASQFIYLDGDGHGVQHSEIHNQMGGLIFEPYV.

A chloroplast-targeting transit peptide spans 1–46 (MATLSMQVSTLSKQVKNLNTFGMGSASKLPMVARRVSTIRLRPICS). Residues aspartate 349 and aspartate 353 each coordinate Mn(2+). Positions 349 to 353 (DDVYD) match the DDXXD motif motif. 2 homodimerization regions span residues 355–361 (YGTLDEL) and 427–464 (EAKW…FTLP). Mn(2+)-binding residues include aspartate 493 and glutamate 501.

Belongs to the terpene synthase family. As to quaternary structure, homodimer. Mn(2+) serves as cofactor. Mg(2+) is required as a cofactor.

Its subcellular location is the plastid. It localises to the chloroplast. The protein operates within secondary metabolite biosynthesis; terpenoid biosynthesis. In terms of biological role, putative monoterpene synthase. This chain is Putative terpene synthase 3, chloroplastic, found in Thymus vulgaris (Thyme).